We begin with the raw amino-acid sequence, 426 residues long: MSPAFRAMDVEPRAKGVLLEPFVHQVGGHSCVLRFNETTLCKPLVPREHQFYETLPAEMRKFTPQYKGVVSVRFEEDEDRNLCLIAYPLKGDHGIVDIVDNSDCEPKSKLLRWTTNKKHHVLETEKTPKDWVRQHRKEEKMKSHKLEEEFEWLKKSEVLYYTVEKKGNISSQLKHYNPWSMKCHQQQLQRMKENAKHRNQYKFILLENLTSRYEVPCVLDLKMGTRQHGDDASEEKAANQIRKCQQSTSAVIGVRVCGMQVYQAGSGQLMFMNKYHGRKLSVQGFKEALFQFFHNGRYLRRELLGPVLKKLTELKAVLERQESYRFYSSSLLVIYDGKERPEVVLDSDAEDLEDLSEESADESAGAYAYKPIGASSVDVRMIDFAHTTCRLYGEDTVVHEGQDAGYIFGLQSLIDIVTEISEESGE.

Residues 207-209 (ENL) and Asp-220 contribute to the ATP site. Residues Lys-222 and 236–243 (KAANQIRK) each bind substrate. An ATP-binding site is contributed by Asp-383. A substrate-binding site is contributed by His-386.

It belongs to the inositol phosphokinase (IPK) family.

It localises to the nucleus. The catalysed reaction is 1D-myo-inositol hexakisphosphate + ATP = 5-diphospho-1D-myo-inositol 1,2,3,4,6-pentakisphosphate + ADP. It functions in the pathway phospholipid metabolism; phosphatidylinositol metabolism. Its activity is regulated as follows. Inhibited by flavonoids, including myricetin, quercetin, luteolin, isorhamnetin, rhamnetin, kaempferol, diosmetin and apigenin. Its function is as follows. Converts inositol hexakisphosphate (InsP6) to diphosphoinositol pentakisphosphate (InsP7/PP-InsP5). In Homo sapiens (Human), this protein is Inositol hexakisphosphate kinase 2.